The chain runs to 169 residues: PTS system glucose-specific EIIA component (169 aa).

The 105-residue stretch at 39–143 (DVVFAEKIVG…STLTPVVISN (105 aa)) folds into the PTS EIIA type-1 domain. Residues H76 and H91 each contribute to the Zn(2+) site. H91 acts as the Tele-phosphohistidine intermediate; for EIIA activity in catalysis. Phosphohistidine; by HPr is present on H91.

In terms of assembly, heterodimer with glycerol kinase (glpk). It depends on Zn(2+) as a cofactor.

It is found in the cytoplasm. Functionally, the phosphoenolpyruvate-dependent sugar phosphotransferase system (sugar PTS), a major carbohydrate active transport system, catalyzes the phosphorylation of incoming sugar substrates concomitantly with their translocation across the cell membrane. The enzyme II complex composed of PtsG and Crr is involved in glucose transport. The protein is PTS system glucose-specific EIIA component (crr) of Escherichia coli O6:H1 (strain CFT073 / ATCC 700928 / UPEC).